Consider the following 212-residue polypeptide: Disintegrin-like halysetin (212 aa).

The 87-residue stretch at 4–90 (PPVCGNELLE…ECPADVFHKN (87 aa)) folds into the Disintegrin domain. 9 disulfides stabilise this stretch: Cys-7-Cys-26, Cys-18-Cys-36, Cys-62-Cys-82, Cys-69-Cys-94, Cys-101-Cys-106, Cys-113-Cys-128, Cys-151-Cys-158, Cys-163-Cys-174, and Cys-200-Cys-205. Residues 68-70 (ECD) carry the D/ECD-tripeptide motif.

It belongs to the venom metalloproteinase (M12B) family. P-III subfamily. P-IIIb sub-subfamily. In terms of assembly, monomer. As to expression, expressed by the venom gland.

The protein resides in the secreted. Inhibits human platelet aggregation stimulated by collagen with an IC(50) of 420 nM. This Gloydius halys (Chinese water mocassin) protein is Disintegrin-like halysetin.